A 125-amino-acid chain; its full sequence is Small ribosomal subunit protein uS13 (125 aa).

Residues Gly-95–Lys-125 are disordered.

This sequence belongs to the universal ribosomal protein uS13 family. As to quaternary structure, part of the 30S ribosomal subunit. Forms a loose heterodimer with protein S19. Forms two bridges to the 50S subunit in the 70S ribosome.

In terms of biological role, located at the top of the head of the 30S subunit, it contacts several helices of the 16S rRNA. In the 70S ribosome it contacts the 23S rRNA (bridge B1a) and protein L5 of the 50S subunit (bridge B1b), connecting the 2 subunits; these bridges are implicated in subunit movement. Contacts the tRNAs in the A and P-sites. The polypeptide is Small ribosomal subunit protein uS13 (Cytophaga hutchinsonii (strain ATCC 33406 / DSM 1761 / CIP 103989 / NBRC 15051 / NCIMB 9469 / D465)).